Here is a 68-residue protein sequence, read N- to C-terminus: Copper transport protein ATOX1 (68 aa).

One can recognise an HMA domain in the interval 1–63 (MPKHEFSVDM…TLEKTGKAVS (63 aa)). Residues C12 and C15 each contribute to the Cu cation site. A Phosphoserine modification is found at S47. An N6-acetyllysine modification is found at K60.

This sequence belongs to the ATX1 family. As to quaternary structure, homodimer. Interacts with ATP7B. Interacts with ATP7A. Interacts (via dimer form) with SLC31A1 (via C-terminal domain); this interaction improves ATOX1 stability and controls intracellular Cu(I) levels.

In terms of biological role, binds and deliver cytosolic copper to the copper ATPase proteins. May be important in cellular antioxidant defense. The polypeptide is Copper transport protein ATOX1 (Canis lupus familiaris (Dog)).